Consider the following 88-residue polypeptide: Small ribosomal subunit protein uS15c (88 aa).

The protein belongs to the universal ribosomal protein uS15 family. As to quaternary structure, part of the 30S ribosomal subunit.

Its subcellular location is the plastid. The protein localises to the chloroplast. This Angiopteris evecta (Mule's foot fern) protein is Small ribosomal subunit protein uS15c (rps15).